The primary structure comprises 571 residues: Glutamine--tRNA ligase (571 aa).

The 'HIGH' region motif lies at 35-45 (PEPNGYLHIGH). Residues 36-38 (EPN) and 42-48 (HIGHAKS) each bind ATP. L-glutamine-binding residues include Asp-68 and Tyr-213. ATP contacts are provided by residues Thr-232, 262-263 (RL), and 270-272 (LSK). A 'KMSKS' region motif is present at residues 269-273 (ILSKR).

It belongs to the class-I aminoacyl-tRNA synthetase family. As to quaternary structure, monomer.

The protein localises to the cytoplasm. It catalyses the reaction tRNA(Gln) + L-glutamine + ATP = L-glutaminyl-tRNA(Gln) + AMP + diphosphate. This is Glutamine--tRNA ligase from Buchnera aphidicola subsp. Acyrthosiphon pisum (strain 5A).